The primary structure comprises 66 residues: Protein translocase subunit SecE (66 aa).

A helical transmembrane segment spans residues 29 to 49 (LVASTLVVVVAVFIFSPICLV).

It belongs to the SecE/SEC61-gamma family. In terms of assembly, component of the Sec protein translocase complex. Heterotrimer consisting of SecY, SecE and SecG subunits. The heterotrimers can form oligomers, although 1 heterotrimer is thought to be able to translocate proteins. Interacts with the ribosome. Interacts with SecDF, and other proteins may be involved. Interacts with SecA.

It localises to the cell inner membrane. Essential subunit of the Sec protein translocation channel SecYEG. Clamps together the 2 halves of SecY. May contact the channel plug during translocation. This Rickettsia montanensis protein is Protein translocase subunit SecE.